Consider the following 125-residue polypeptide: Small ribosomal subunit protein bS6 (125 aa).

Belongs to the bacterial ribosomal protein bS6 family.

Functionally, binds together with bS18 to 16S ribosomal RNA. This Baumannia cicadellinicola subsp. Homalodisca coagulata protein is Small ribosomal subunit protein bS6.